Consider the following 443-residue polypeptide: UDP-N-acetylmuramate--L-alanine ligase (443 aa).

Residue 110-116 participates in ATP binding; that stretch reads GAHGKTS.

This sequence belongs to the MurCDEF family.

The protein resides in the cytoplasm. It catalyses the reaction UDP-N-acetyl-alpha-D-muramate + L-alanine + ATP = UDP-N-acetyl-alpha-D-muramoyl-L-alanine + ADP + phosphate + H(+). It participates in cell wall biogenesis; peptidoglycan biosynthesis. Its function is as follows. Cell wall formation. In Lactococcus lactis subsp. lactis (strain IL1403) (Streptococcus lactis), this protein is UDP-N-acetylmuramate--L-alanine ligase.